A 354-amino-acid polypeptide reads, in one-letter code: Uroporphyrinogen decarboxylase (354 aa).

Substrate-binding positions include R27–R31, D77, Y154, S209, and H327.

This sequence belongs to the uroporphyrinogen decarboxylase family. In terms of assembly, homodimer.

Its subcellular location is the cytoplasm. The catalysed reaction is uroporphyrinogen III + 4 H(+) = coproporphyrinogen III + 4 CO2. Its pathway is porphyrin-containing compound metabolism; protoporphyrin-IX biosynthesis; coproporphyrinogen-III from 5-aminolevulinate: step 4/4. In terms of biological role, catalyzes the decarboxylation of four acetate groups of uroporphyrinogen-III to yield coproporphyrinogen-III. The polypeptide is Uroporphyrinogen decarboxylase (Methylobacillus flagellatus (strain ATCC 51484 / DSM 6875 / VKM B-1610 / KT)).